The sequence spans 583 residues: Aspartate--tRNA ligase (583 aa).

E174 contacts L-aspartate. The interval 198-201 is aspartate; sequence QITK. R220 is a binding site for L-aspartate. ATP is bound by residues 220–222 and Q229; that span reads RDE. H443 contributes to the L-aspartate binding site. Residue E477 participates in ATP binding. An L-aspartate-binding site is contributed by R484. An ATP-binding site is contributed by 529-532; it reads GLDR.

It belongs to the class-II aminoacyl-tRNA synthetase family. Type 1 subfamily. As to quaternary structure, homodimer.

It localises to the cytoplasm. It carries out the reaction tRNA(Asp) + L-aspartate + ATP = L-aspartyl-tRNA(Asp) + AMP + diphosphate. Its function is as follows. Catalyzes the attachment of L-aspartate to tRNA(Asp) in a two-step reaction: L-aspartate is first activated by ATP to form Asp-AMP and then transferred to the acceptor end of tRNA(Asp). The polypeptide is Aspartate--tRNA ligase (Streptococcus agalactiae serotype III (strain NEM316)).